We begin with the raw amino-acid sequence, 654 residues long: Probable potassium transport system protein Kup (654 aa).

A run of 13 helical transmembrane segments spans residues 17 to 37 (GILVTLGIIYGDIGTSPLYVM), 40 to 60 (IIGLHTIKPEVVLGGISAIFW), 71 to 91 (VLITLSADNHGEGGIFALYAL), 99 to 119 (WLIIPAIIGGSALLADGIITP), 137 to 157 (INTVPIVIAILVVLFTIQQFG), 164 to 184 (FFAPMMMIWFAMLAILGILQI), 202 to 222 (LLSIHPDGFYVLGFVFLCTTG), 240 to 260 (ISWIFVKIALLLNYFGQGAYL), 281 to 301 (LVMPEWFQPFGIVISTMAAVI), 338 to 358 (IYIPSINWLLLAGCIGIVLHF), 369 to 389 (GLAIVLCMIMTTILLTYFMIL), 394 to 414 (WFIIAPLILLYLVIEFSFLIA), and 423 to 443 (GYVTLIIASALTFIMSIWYTA).

It belongs to the HAK/KUP transporter (TC 2.A.72) family.

It is found in the cell inner membrane. It carries out the reaction K(+)(in) + H(+)(in) = K(+)(out) + H(+)(out). Functionally, transport of potassium into the cell. Likely operates as a K(+):H(+) symporter. This Flavobacterium psychrophilum (strain ATCC 49511 / DSM 21280 / CIP 103535 / JIP02/86) protein is Probable potassium transport system protein Kup.